The following is a 312-amino-acid chain: Malate dehydrogenase (312 aa).

Residues 12–17 (GAGFTG) and Asp36 contribute to the NAD(+) site. Positions 87 and 93 each coordinate substrate. Residues Asn100 and 123-125 (LTN) contribute to the NAD(+) site. Asn125 is a substrate binding site. At Ser149 the chain carries Phosphoserine. Arg156 is a binding site for substrate. His180 functions as the Proton acceptor in the catalytic mechanism.

This sequence belongs to the LDH/MDH superfamily. MDH type 3 family.

It carries out the reaction (S)-malate + NAD(+) = oxaloacetate + NADH + H(+). In terms of biological role, catalyzes the reversible oxidation of malate to oxaloacetate. In Bacillus anthracis (strain A0248), this protein is Malate dehydrogenase.